Reading from the N-terminus, the 126-residue chain is Small ribosomal subunit protein uS12 (126 aa).

Residue D89 is modified to 3-methylthioaspartic acid.

The protein belongs to the universal ribosomal protein uS12 family. As to quaternary structure, part of the 30S ribosomal subunit. Contacts proteins S8 and S17. May interact with IF1 in the 30S initiation complex.

Functionally, with S4 and S5 plays an important role in translational accuracy. Interacts with and stabilizes bases of the 16S rRNA that are involved in tRNA selection in the A site and with the mRNA backbone. Located at the interface of the 30S and 50S subunits, it traverses the body of the 30S subunit contacting proteins on the other side and probably holding the rRNA structure together. The combined cluster of proteins S8, S12 and S17 appears to hold together the shoulder and platform of the 30S subunit. The sequence is that of Small ribosomal subunit protein uS12 from Sulfurimonas denitrificans (strain ATCC 33889 / DSM 1251) (Thiomicrospira denitrificans (strain ATCC 33889 / DSM 1251)).